Consider the following 463-residue polypeptide: ATP synthase subunit beta 1 (463 aa).

152–159 (GGAGVGKT) serves as a coordination point for ATP.

Belongs to the ATPase alpha/beta chains family. In terms of assembly, F-type ATPases have 2 components, CF(1) - the catalytic core - and CF(0) - the membrane proton channel. CF(1) has five subunits: alpha(3), beta(3), gamma(1), delta(1), epsilon(1). CF(0) has three main subunits: a(1), b(2) and c(9-12). The alpha and beta chains form an alternating ring which encloses part of the gamma chain. CF(1) is attached to CF(0) by a central stalk formed by the gamma and epsilon chains, while a peripheral stalk is formed by the delta and b chains.

It localises to the cell inner membrane. It catalyses the reaction ATP + H2O + 4 H(+)(in) = ADP + phosphate + 5 H(+)(out). In terms of biological role, produces ATP from ADP in the presence of a proton gradient across the membrane. The catalytic sites are hosted primarily by the beta subunits. The sequence is that of ATP synthase subunit beta 1 from Shewanella frigidimarina (strain NCIMB 400).